The chain runs to 568 residues: MKCSFHIPEKYQWASTLFVHVALIAGVAVYTVFGALSMQWLESPDRVRALLKRELKPVESLPPPPSISGLPDRITRVYLGEELAILDPGVHECLERTILTLFHDTKCDPYSFEHLNIELIDRCYAEANVPIPEGYGGQPRKKIKNKEEEKDVIDETPAEKWSIGNSVIFAFTVITTIGYGHVAPETFEGRLFLIFYGVIGVPFTLLTIADLGMFLTRFLKNLLTMARRFAHYLVKLYQKAKKQRNKSQKTSPVMPDSERSEVWNTGKEMKEMSMRTAREPGEGDEIEVIENGNDENGKEEDEEEPENNEPRKTEESIALGITFTCYLVAGAKILSVYEPEMDFFKALYFNFVTLTTIGLGDFVPKSFDYLLITLIYIGIGLALTTMAIEIAADLLKKLHYIGRKMENVGQAVVWFGGKKMTMKSLVKHLGDQFNIPEEELANFDMSAFVDNAIKVEKGEIATLRKPPTPPVVFRERAFSFSNVRNSSESALKYVDDNRFSKTTQPTIYTVIIHETTRTIDTLHNLADAIRRDPSIPRLDLDVHYLTDMSAPTSFDENYLRTYTNARRK.

At M1–S15 the chain is on the cytoplasmic side. The chain crosses the membrane as a helical span at residues T16 to L36. The pore-forming intramembrane region spans I163–A183. The helical transmembrane segment at L191–L211 threads the bilayer. The Cytoplasmic segment spans residues G212–S316. Disordered stretches follow at residues Q243–V262 and M274–E314. Residues G297–N307 are compositionally biased toward acidic residues. The helical transmembrane segment at I317–Y337 threads the bilayer. Residues F343–V363 constitute an intramembrane region (pore-forming). The chain crosses the membrane as a helical span at residues L370 to I390. Topologically, residues A391–K568 are cytoplasmic.

It belongs to the two pore domain potassium channel (TC 1.A.1.8) family. Expressed in ray A-type neurons and cell bodies. Also seen in head, pharyngeal and phasmid neurons, and in coelomocytes.

The protein resides in the membrane. In terms of biological role, potassium channel protein that may be component of regulatory network that controls ray development and function. This chain is TWiK family of potassium channels protein 9 (twk-9), found in Caenorhabditis elegans.